The chain runs to 345 residues: Glycerol-3-phosphate dehydrogenase [NAD(P)+] (345 aa).

Positions 11, 12, 32, 33, and 105 each coordinate NADPH. 3 residues coordinate sn-glycerol 3-phosphate: Lys105, Gly136, and Ser138. Ala140 provides a ligand contact to NADPH. The sn-glycerol 3-phosphate site is built by Lys191, Asp244, Ser254, Arg255, and Asn256. Residue Lys191 is the Proton acceptor of the active site. Residue Arg255 coordinates NADPH. NADPH is bound by residues Val279 and Glu281.

This sequence belongs to the NAD-dependent glycerol-3-phosphate dehydrogenase family.

The protein localises to the cytoplasm. The catalysed reaction is sn-glycerol 3-phosphate + NAD(+) = dihydroxyacetone phosphate + NADH + H(+). It carries out the reaction sn-glycerol 3-phosphate + NADP(+) = dihydroxyacetone phosphate + NADPH + H(+). The protein operates within membrane lipid metabolism; glycerophospholipid metabolism. Functionally, catalyzes the reduction of the glycolytic intermediate dihydroxyacetone phosphate (DHAP) to sn-glycerol 3-phosphate (G3P), the key precursor for phospholipid synthesis. The polypeptide is Glycerol-3-phosphate dehydrogenase [NAD(P)+] (Halalkalibacterium halodurans (strain ATCC BAA-125 / DSM 18197 / FERM 7344 / JCM 9153 / C-125) (Bacillus halodurans)).